Reading from the N-terminus, the 391-residue chain is Elongation factor Tu (391 aa).

The region spanning 10–201 is the tr-type G domain; sequence KPHVNIGTIG…AVDDYIPTPA (192 aa). Residues 19–26 are G1; the sequence is GHVDHGKT. 19–26 contributes to the GTP binding site; it reads GHVDHGKT. Threonine 26 is a Mg(2+) binding site. The segment at 55–59 is G2; sequence GITIS. The interval 76–79 is G3; the sequence is DCPG. Residues 76–80 and 131–134 each bind GTP; these read DCPGH and NKVD. Residues 131–134 are G4; it reads NKVD. The segment at 169 to 171 is G5; the sequence is SAL.

This sequence belongs to the TRAFAC class translation factor GTPase superfamily. Classic translation factor GTPase family. EF-Tu/EF-1A subfamily. As to quaternary structure, monomer.

The protein resides in the cytoplasm. The enzyme catalyses GTP + H2O = GDP + phosphate + H(+). Functionally, GTP hydrolase that promotes the GTP-dependent binding of aminoacyl-tRNA to the A-site of ribosomes during protein biosynthesis. In Dinoroseobacter shibae (strain DSM 16493 / NCIMB 14021 / DFL 12), this protein is Elongation factor Tu.